Reading from the N-terminus, the 256-residue chain is Catechol O-methyltransferase A (256 aa).

An N-terminal signal peptide occupies residues 1-27; the sequence is MLWVVLAVVVVLASVLVLLRQSSGLLA. The N-linked (GlcNAc...) asparagine glycan is linked to Asn58. Residues Val84, Ser114, Glu132, and Asp183 each contribute to the S-adenosyl-L-methionine site. Asp183 contacts Mg(2+). Lys186 is a substrate binding site. Mg(2+)-binding residues include Asp211 and Asn212. Substrate contacts are provided by Asn212 and Glu241.

Belongs to the class I-like SAM-binding methyltransferase superfamily. Cation-dependent O-methyltransferase family. It depends on Mg(2+) as a cofactor. In terms of tissue distribution, widely expressed. Has higher expression in females compared to males. Strongly expressed in liver and diencephalon. Expressed at lower levels in hindbrain, spinal cord, eye, telencephalon, spleen, gut, gill and muscle. Detected in ovary and testis. In eye, detected in all layers of the retina with highest expression in the inner nuclear layer. In gut, expressed in the lamina propria but has little or no expression in gut epithelium. In brain, has strongest expression near the midline of the telencephalon, in the periventricular gray zone of the optic tectum, in the preglomerular nucleus, and near the walls of the diencephalic ventricle.

The protein localises to the secreted. It catalyses the reaction a catechol + S-adenosyl-L-methionine = a guaiacol + S-adenosyl-L-homocysteine + H(+). Its function is as follows. Catalyzes the O-methylation, and thereby the inactivation, of catecholamine neurotransmitters and catechol hormones. Shows highest activity towards catecholestrogens and dobutamine. Also has lower activity towards L-DOPA, dopamine and epinephrine. Active towards the xenobiotic compounds methyl-DOPA, carbidopa, isoproterenol, and apomorphine. The sequence is that of Catechol O-methyltransferase A from Danio rerio (Zebrafish).